The chain runs to 663 residues: Probable potassium transport system protein Kup (663 aa).

The disordered stretch occupies residues 1-23 (MSDNPSSRAGPEVVPTPPPSPAA). 12 helical membrane-spanning segments follow: residues 81 to 101 (PANVLGVLSLVFWAMTFVVTF), 137 to 157 (LLIILGLFGAALLYGDGVITP), 173 to 193 (PALEHWVVPVTVGILALLFFI), 201 to 221 (VGAVFGPVMLVWFLCIAILGV), 224 to 244 (ILFDATILQAVLPTHAVAFFA), 248 to 268 (WHGFLVLGGVVLVITGGEALY), 283 to 303 (WLLVAMPALMLNYMGQGAILL), 315 to 335 (LLVPGWALYPMIAVATAAAIV), 373 to 393 (IYVPEVNALLGAATIALVLGF), 399 to 419 (LAAAYGIAVTGTMAITTLLFH), 433 to 453 (AWPLTLLFLLVDLAFFGANIV), and 455 to 475 (VEEGGWFPLAAAAFVFTLLST).

It belongs to the HAK/KUP transporter (TC 2.A.72) family.

The protein localises to the cell inner membrane. It catalyses the reaction K(+)(in) + H(+)(in) = K(+)(out) + H(+)(out). Transport of potassium into the cell. Likely operates as a K(+):H(+) symporter. This Anaeromyxobacter sp. (strain Fw109-5) protein is Probable potassium transport system protein Kup.